We begin with the raw amino-acid sequence, 301 residues long: Peptidyl-prolyl isomerase CWC27 (301 aa).

The 151-residue stretch at T9 to I159 folds into the PPIase cyclophilin-type domain. Residues T251–E280 form a disordered region.

This sequence belongs to the cyclophilin-type PPIase family. CWC27 subfamily. Belongs to the CWC complex (or CEF1-associated complex), a spliceosome subcomplex composed of the U2, U5 and U6 snRNAs and at least BUD13, BUD31, BRR2, CDC40, CEF1, CLF1, CUS1, CWC2, CWC15, CWC21, CWC22, CWC23, CWC24, CWC25, CWC27, ECM2, HSH155, IST3, ISY1, LEA1, MSL1, NTC20, PRP8, PRP9, PRP11, PRP19, PRP21, PRP22, PRP45, PRP46, SLU7, SMB1, SMD1, SMD2, SMD3, SMX2, SMX3, SNT309, SNU114, SPP2, SYF1, SYF2, RSE1 and YJU2.

It is found in the cytoplasm. The protein localises to the nucleus. The catalysed reaction is [protein]-peptidylproline (omega=180) = [protein]-peptidylproline (omega=0). Its function is as follows. PPIases accelerate the folding of proteins. Catalyzes the cis-trans isomerization of proline imidic peptide bonds in oligopeptides. Involved in pre-mRNA splicing. This Saccharomyces cerevisiae (strain ATCC 204508 / S288c) (Baker's yeast) protein is Peptidyl-prolyl isomerase CWC27 (CWC27).